The chain runs to 363 residues: MKRVFNFSPGPAAIPQEVIQQAADEMANWRGCGLSVMEMSHRGREFTEILATTKDDLRSLMSIPDNYKILLMQGGAIAENAIVPMNLVGMKPQPATIDFVNTGHWSIKSIEEARKYANVNVAASSEDQNFTYVPARDTWKLTPDAAYVHVCTNETIGGVEFDFTPDVGNVPLVADMSSNILSREIDVSRYAVIYAGAQKNIGPAGLTIVIVRDDMLGHALPICPSAFDWKLVAEHDSMFNTPPTYPIYIAGLTFQWMKRQGGVAAMEKVNIAKAKLLYDYLDSTDFYVNNVPAANRSRMNVPFFLRDASLNTKFLTEAGQNDLVQLKGHSSVGGMRASIYNAMPIEGVQALVDFMKAFEKKYG.

Position 42 (Arg42) interacts with L-glutamate. Positions 105, 155, 175, and 198 each coordinate pyridoxal 5'-phosphate. At Lys199 the chain carries N6-(pyridoxal phosphate)lysine. 240 to 241 (NT) is a pyridoxal 5'-phosphate binding site.

It belongs to the class-V pyridoxal-phosphate-dependent aminotransferase family. SerC subfamily. In terms of assembly, homodimer. The cofactor is pyridoxal 5'-phosphate.

The protein localises to the cytoplasm. The enzyme catalyses O-phospho-L-serine + 2-oxoglutarate = 3-phosphooxypyruvate + L-glutamate. The catalysed reaction is 4-(phosphooxy)-L-threonine + 2-oxoglutarate = (R)-3-hydroxy-2-oxo-4-phosphooxybutanoate + L-glutamate. It functions in the pathway amino-acid biosynthesis; L-serine biosynthesis; L-serine from 3-phospho-D-glycerate: step 2/3. The protein operates within cofactor biosynthesis; pyridoxine 5'-phosphate biosynthesis; pyridoxine 5'-phosphate from D-erythrose 4-phosphate: step 3/5. In terms of biological role, catalyzes the reversible conversion of 3-phosphohydroxypyruvate to phosphoserine and of 3-hydroxy-2-oxo-4-phosphonooxybutanoate to phosphohydroxythreonine. This Herminiimonas arsenicoxydans protein is Phosphoserine aminotransferase.